A 499-amino-acid chain; its full sequence is E3 ubiquitin-protein ligase TRIM69 (499 aa).

Residues 1–152 (MEVSSRPPSN…SMGQSKDFLQ (152 aa)) form a necessary for nuclear localization region. The segment at 41–82 (CPLCNDWFRDPLMLTCGHNFCQACIQNYWKMQAKETFCPECK) adopts an RING-type zinc-finger fold. The stretch at 160-265 (FTEELAIYQS…NIQARMEQQN (106 aa)) forms a coiled coil. Residues 305–499 (PIQYTIWREM…KEPLHIVHPQ (195 aa)) form the B30.2/SPRY domain. Serine 341 is subject to Phosphoserine.

The protein belongs to the TRIM/RBCC family. Homo-multimer; required for antiviral activity. Interacts with PML. In terms of processing, phosphorylated. Phosphorylation is necessary for nuclear localization.

Its subcellular location is the cytoplasm. It is found in the nucleus. The protein localises to the nucleus speckle. It localises to the cytoskeleton. The protein resides in the microtubule organizing center. Its subcellular location is the centrosome. It catalyses the reaction S-ubiquitinyl-[E2 ubiquitin-conjugating enzyme]-L-cysteine + [acceptor protein]-L-lysine = [E2 ubiquitin-conjugating enzyme]-L-cysteine + N(6)-ubiquitinyl-[acceptor protein]-L-lysine.. It participates in protein modification; protein ubiquitination. E3 ubiquitin ligase that plays an important role in antiviral immunity by restricting different viral infections including dengue virus or vesicular stomatitis indiana virus. Ubiquitinates viral proteins such as dengue virus NS3 thereby limiting infection. In addition, acts as a key mediator of type I interferon induced microtubule stabilization by directly associating to microtubules independently of its E3 ligase activity. Also plays a role in cataract formation together with TP53. Mechanistically, inhibits UVB-induced cell apoptosis and reactive oxygen species (ROS) production by inducing TP53 ubiquitination. Regulates centrosome dynamics and mitotic progression by ubiquitinating STK3/MST2; leading to its redistribution to the perinuclear cytoskeleton and subsequent phosphorylation by PLK1. The sequence is that of E3 ubiquitin-protein ligase TRIM69 (Trim69) from Rattus norvegicus (Rat).